A 397-amino-acid chain; its full sequence is 1-deoxy-D-xylulose 5-phosphate reductoisomerase (397 aa).

Thr-12, Gly-13, Ser-14, Ile-15, Gly-38, Lys-39, Asn-40, and Asn-126 together coordinate NADPH. Lys-127 contacts 1-deoxy-D-xylulose 5-phosphate. Glu-128 provides a ligand contact to NADPH. Asp-152 provides a ligand contact to Mn(2+). The 1-deoxy-D-xylulose 5-phosphate site is built by Ser-153, Glu-154, Ser-188, and His-211. Residue Glu-154 coordinates Mn(2+). Gly-217 contacts NADPH. Ser-224, Asn-229, Lys-230, and Glu-233 together coordinate 1-deoxy-D-xylulose 5-phosphate. Mn(2+) is bound at residue Glu-233.

The protein belongs to the DXR family. The cofactor is Mg(2+). Requires Mn(2+) as cofactor.

It catalyses the reaction 2-C-methyl-D-erythritol 4-phosphate + NADP(+) = 1-deoxy-D-xylulose 5-phosphate + NADPH + H(+). It functions in the pathway isoprenoid biosynthesis; isopentenyl diphosphate biosynthesis via DXP pathway; isopentenyl diphosphate from 1-deoxy-D-xylulose 5-phosphate: step 1/6. In terms of biological role, catalyzes the NADPH-dependent rearrangement and reduction of 1-deoxy-D-xylulose-5-phosphate (DXP) to 2-C-methyl-D-erythritol 4-phosphate (MEP). The polypeptide is 1-deoxy-D-xylulose 5-phosphate reductoisomerase (Haemophilus influenzae (strain ATCC 51907 / DSM 11121 / KW20 / Rd)).